The primary structure comprises 235 residues: tRNA1(Val) (adenine(37)-N6)-methyltransferase (235 aa).

It belongs to the methyltransferase superfamily. tRNA (adenine-N(6)-)-methyltransferase family.

Its subcellular location is the cytoplasm. It carries out the reaction adenosine(37) in tRNA1(Val) + S-adenosyl-L-methionine = N(6)-methyladenosine(37) in tRNA1(Val) + S-adenosyl-L-homocysteine + H(+). Functionally, specifically methylates the adenine in position 37 of tRNA(1)(Val) (anticodon cmo5UAC). In Flavobacterium johnsoniae (strain ATCC 17061 / DSM 2064 / JCM 8514 / BCRC 14874 / CCUG 350202 / NBRC 14942 / NCIMB 11054 / UW101) (Cytophaga johnsonae), this protein is tRNA1(Val) (adenine(37)-N6)-methyltransferase.